Here is a 199-residue protein sequence, read N- to C-terminus: Cytochrome c oxidase subunit 2 (199 aa).

Residues 1 to 13 form a helical membrane-spanning segment; the sequence is AICSLVLYLLSLM. Residues 14-26 are Mitochondrial matrix-facing; the sequence is LMEKLSSNTVDAQ. The helical transmembrane segment at 27-54 threads the bilayer; that stretch reads EVELIWTILPAIVLILLALPSLQILYMM. At 55-199 the chain is on the mitochondrial intermembrane side; the sequence is DEIDEPDLTL…SSLLSSSSSL (145 aa). Histidine 128, cysteine 163, glutamate 165, cysteine 167, histidine 171, and methionine 174 together coordinate Cu cation. Residue glutamate 165 participates in Mg(2+) binding.

This sequence belongs to the cytochrome c oxidase subunit 2 family. Component of the cytochrome c oxidase (complex IV, CIV), a multisubunit enzyme composed of 14 subunits. The complex is composed of a catalytic core of 3 subunits MT-CO1, MT-CO2 and MT-CO3, encoded in the mitochondrial DNA, and 11 supernumerary subunits COX4I, COX5A, COX5B, COX6A, COX6B, COX6C, COX7A, COX7B, COX7C, COX8 and NDUFA4, which are encoded in the nuclear genome. The complex exists as a monomer or a dimer and forms supercomplexes (SCs) in the inner mitochondrial membrane with NADH-ubiquinone oxidoreductase (complex I, CI) and ubiquinol-cytochrome c oxidoreductase (cytochrome b-c1 complex, complex III, CIII), resulting in different assemblies (supercomplex SCI(1)III(2)IV(1) and megacomplex MCI(2)III(2)IV(2)). Found in a complex with TMEM177, COA6, COX18, COX20, SCO1 and SCO2. Interacts with TMEM177 in a COX20-dependent manner. Interacts with COX20. Interacts with COX16. Cu cation is required as a cofactor.

Its subcellular location is the mitochondrion inner membrane. The enzyme catalyses 4 Fe(II)-[cytochrome c] + O2 + 8 H(+)(in) = 4 Fe(III)-[cytochrome c] + 2 H2O + 4 H(+)(out). In terms of biological role, component of the cytochrome c oxidase, the last enzyme in the mitochondrial electron transport chain which drives oxidative phosphorylation. The respiratory chain contains 3 multisubunit complexes succinate dehydrogenase (complex II, CII), ubiquinol-cytochrome c oxidoreductase (cytochrome b-c1 complex, complex III, CIII) and cytochrome c oxidase (complex IV, CIV), that cooperate to transfer electrons derived from NADH and succinate to molecular oxygen, creating an electrochemical gradient over the inner membrane that drives transmembrane transport and the ATP synthase. Cytochrome c oxidase is the component of the respiratory chain that catalyzes the reduction of oxygen to water. Electrons originating from reduced cytochrome c in the intermembrane space (IMS) are transferred via the dinuclear copper A center (CU(A)) of subunit 2 and heme A of subunit 1 to the active site in subunit 1, a binuclear center (BNC) formed by heme A3 and copper B (CU(B)). The BNC reduces molecular oxygen to 2 water molecules using 4 electrons from cytochrome c in the IMS and 4 protons from the mitochondrial matrix. The polypeptide is Cytochrome c oxidase subunit 2 (MT-CO2) (Rhea americana (Greater rhea)).